The primary structure comprises 828 residues: Glycerol-3-phosphate acyltransferase (828 aa).

The short motif at His-310–Asp-315 is the HXXXXD motif element.

This sequence belongs to the GPAT/DAPAT family.

The protein resides in the cell inner membrane. The enzyme catalyses sn-glycerol 3-phosphate + an acyl-CoA = a 1-acyl-sn-glycero-3-phosphate + CoA. It functions in the pathway phospholipid metabolism; CDP-diacylglycerol biosynthesis; CDP-diacylglycerol from sn-glycerol 3-phosphate: step 1/3. This is Glycerol-3-phosphate acyltransferase from Pseudomonas putida (strain ATCC 47054 / DSM 6125 / CFBP 8728 / NCIMB 11950 / KT2440).